The sequence spans 219 residues: Glucagon-2 (219 aa).

The signal sequence occupies residues 1 to 20 (MKSTCYMIGILLLILQNTYQ). 5 consecutive propeptides follow at residues 21–50 (SPVP…LKEV), 84–95 (SGGLSRRNADYE), 136–140 (NAEIE), 175–178 (IRYS), and 213–219 (KDLLEEH). The disordered stretch occupies residues 23–43 (VPEADGSSRSVKAARNEAVDD).

It belongs to the glucagon family.

The protein localises to the secreted. Promotes hydrolysis of glycogen and lipids, and raises the blood sugar level. This chain is Glucagon-2 (gcg2), found in Xenopus laevis (African clawed frog).